The chain runs to 527 residues: Aspartokinase (527 aa).

Phosphothreonine is present on Thr333. Residues 442-527 enclose the ACT domain; the sequence is LVGKHMKQYI…RLEQLKRLGI (86 aa).

The protein belongs to the aspartokinase family. In terms of assembly, homohexamer. Interacts with FPR1; the interaction is direct, plays a role in feedback inhibition of aspartokinase by threonine, and inhibited by tacrolimus and sirolimus.

The catalysed reaction is L-aspartate + ATP = 4-phospho-L-aspartate + ADP. Its pathway is amino-acid biosynthesis; L-methionine biosynthesis via de novo pathway; L-homoserine from L-aspartate: step 1/3. It functions in the pathway amino-acid biosynthesis; L-threonine biosynthesis; L-threonine from L-aspartate: step 1/5. Its activity is regulated as follows. Allosterically inhibited by threonine. Phosphorylates aspartate, the first step in the biosynthesis of amino acids that derive from aspartate (the aspartate family of amino acids), including methioinine and threonine, the latter of which is a precursor to isoleucine. This Saccharomyces cerevisiae (strain ATCC 204508 / S288c) (Baker's yeast) protein is Aspartokinase (HOM3).